Here is a 478-residue protein sequence, read N- to C-terminus: ATP synthase subunit beta (478 aa).

Position 160–167 (160–167) interacts with ATP; sequence GGAGVGKT.

The protein belongs to the ATPase alpha/beta chains family. As to quaternary structure, F-type ATPases have 2 components, CF(1) - the catalytic core - and CF(0) - the membrane proton channel. CF(1) has five subunits: alpha(3), beta(3), gamma(1), delta(1), epsilon(1). CF(0) has three main subunits: a(1), b(2) and c(9-12). The alpha and beta chains form an alternating ring which encloses part of the gamma chain. CF(1) is attached to CF(0) by a central stalk formed by the gamma and epsilon chains, while a peripheral stalk is formed by the delta and b chains.

The protein resides in the cell inner membrane. It carries out the reaction ATP + H2O + 4 H(+)(in) = ADP + phosphate + 5 H(+)(out). Functionally, produces ATP from ADP in the presence of a proton gradient across the membrane. The catalytic sites are hosted primarily by the beta subunits. This chain is ATP synthase subunit beta, found in Orientia tsutsugamushi (strain Ikeda) (Rickettsia tsutsugamushi).